Reading from the N-terminus, the 162-residue chain is Succinate dehydrogenase assembly factor 2-A, mitochondrial (162 aa).

A mitochondrion-targeting transit peptide spans 1–23; the sequence is MLRQLRLTMDISGWIFLPWRRSM.

Belongs to the SDHAF2 family. As to quaternary structure, interacts with the flavoprotein subunit within the SDH catalytic dimer.

It is found in the mitochondrion matrix. Plays an essential role in the assembly of succinate dehydrogenase (SDH), an enzyme complex (also referred to as respiratory complex II) that is a component of both the tricarboxylic acid (TCA) cycle and the mitochondrial electron transport chain, and which couples the oxidation of succinate to fumarate with the reduction of ubiquinone (coenzyme Q) to ubiquinol. Required for flavinylation (covalent attachment of FAD) of the flavoprotein subunit of the SDH catalytic dimer. This is Succinate dehydrogenase assembly factor 2-A, mitochondrial from Drosophila erecta (Fruit fly).